The primary structure comprises 87 residues: Putative sodium channel toxin Ts38 (87 aa).

Positions 1 to 22 are cleaved as a signal peptide; the sequence is MKHLKFYSILFLFSIFVYKVNA. 3 disulfides stabilise this stretch: C42-C65, C51-C72, and C55-C74.

Belongs to the long (3 C-C) scorpion toxin superfamily. Sodium channel inhibitor family. In terms of tissue distribution, expressed by the venom gland.

The protein resides in the secreted. In terms of biological role, putative sodium channel toxin. This Tityus serrulatus (Brazilian scorpion) protein is Putative sodium channel toxin Ts38.